A 343-amino-acid chain; its full sequence is Glycerol-3-phosphate dehydrogenase [NAD(P)+] (343 aa).

NADPH contacts are provided by Ser-15, Phe-16, Arg-36, and Lys-110. Sn-glycerol 3-phosphate is bound by residues Lys-110 and Gly-138. Ala-142 contributes to the NADPH binding site. 5 residues coordinate sn-glycerol 3-phosphate: Lys-193, Asp-246, Ser-256, Arg-257, and Asn-258. Lys-193 acts as the Proton acceptor in catalysis. Arg-257 lines the NADPH pocket. Residue Glu-283 coordinates NADPH.

The protein belongs to the NAD-dependent glycerol-3-phosphate dehydrogenase family.

Its subcellular location is the cytoplasm. The enzyme catalyses sn-glycerol 3-phosphate + NAD(+) = dihydroxyacetone phosphate + NADH + H(+). It carries out the reaction sn-glycerol 3-phosphate + NADP(+) = dihydroxyacetone phosphate + NADPH + H(+). Its pathway is membrane lipid metabolism; glycerophospholipid metabolism. In terms of biological role, catalyzes the reduction of the glycolytic intermediate dihydroxyacetone phosphate (DHAP) to sn-glycerol 3-phosphate (G3P), the key precursor for phospholipid synthesis. The sequence is that of Glycerol-3-phosphate dehydrogenase [NAD(P)+] from Alcanivorax borkumensis (strain ATCC 700651 / DSM 11573 / NCIMB 13689 / SK2).